Consider the following 265-residue polypeptide: 5'-nucleotidase SurE (265 aa).

4 residues coordinate a divalent metal cation: D8, D9, S40, and N98.

Belongs to the SurE nucleotidase family. The cofactor is a divalent metal cation.

It is found in the cytoplasm. The enzyme catalyses a ribonucleoside 5'-phosphate + H2O = a ribonucleoside + phosphate. In terms of biological role, nucleotidase that shows phosphatase activity on nucleoside 5'-monophosphates. The sequence is that of 5'-nucleotidase SurE from Trichormus variabilis (strain ATCC 29413 / PCC 7937) (Anabaena variabilis).